A 214-amino-acid polypeptide reads, in one-letter code: Peptidyl-tRNA hydrolase (214 aa).

Y14 lines the tRNA pocket. H19 functions as the Proton acceptor in the catalytic mechanism. TRNA is bound by residues Y64, N66, and N113. The tract at residues 184–214 (RINAPPPKPEKKRGSETSDPSAESADHAGGG) is disordered.

Belongs to the PTH family. In terms of assembly, monomer.

It is found in the cytoplasm. It catalyses the reaction an N-acyl-L-alpha-aminoacyl-tRNA + H2O = an N-acyl-L-amino acid + a tRNA + H(+). Functionally, hydrolyzes ribosome-free peptidyl-tRNAs (with 1 or more amino acids incorporated), which drop off the ribosome during protein synthesis, or as a result of ribosome stalling. In terms of biological role, catalyzes the release of premature peptidyl moieties from peptidyl-tRNA molecules trapped in stalled 50S ribosomal subunits, and thus maintains levels of free tRNAs and 50S ribosomes. This is Peptidyl-tRNA hydrolase from Roseiflexus castenholzii (strain DSM 13941 / HLO8).